The primary structure comprises 187 residues: Tetratricopeptide repeat protein 36 (187 aa).

3 TPR repeats span residues 47–80, 82–114, and 119–152; these read VKDLELQGVSSAESGDLPAALQHFNQAISVLPQR, SAYNNRAQTKRLLGDTKGAVEDLEHAISLSNGK, and CQALVQRGLLLRLSGHDEEARLDFERAAALGSEF.

The protein belongs to the TTC36 family.

This Danio rerio (Zebrafish) protein is Tetratricopeptide repeat protein 36 (ttc36).